A 287-amino-acid polypeptide reads, in one-letter code: Probable endonuclease 4 (287 aa).

Histidine 69, histidine 109, glutamate 144, aspartate 178, histidine 181, histidine 215, aspartate 228, histidine 230, and glutamate 260 together coordinate Zn(2+).

This sequence belongs to the AP endonuclease 2 family. Requires Zn(2+) as cofactor.

The catalysed reaction is Endonucleolytic cleavage to 5'-phosphooligonucleotide end-products.. Its function is as follows. Endonuclease IV plays a role in DNA repair. It cleaves phosphodiester bonds at apurinic or apyrimidinic (AP) sites, generating a 3'-hydroxyl group and a 5'-terminal sugar phosphate. In Thermotoga maritima (strain ATCC 43589 / DSM 3109 / JCM 10099 / NBRC 100826 / MSB8), this protein is Probable endonuclease 4.